The sequence spans 90 residues: Secretoglobin family 1D member 1 (90 aa).

A signal peptide spans 1 to 21 (MRLSVCLLLLTLALCCYRANA).

As to quaternary structure, heterodimer of a lipophilin A and a lipophilin C (mammaglobin B) monomer associated head to head. Expressed in lachrymal gland, thymus, kidney, testis, ovary and salivary gland.

It is found in the secreted. Its function is as follows. May bind androgens and other steroids, may also bind estramustine, a chemotherapeutic agent used for prostate cancer. May be under transcriptional regulation of steroid hormones. This is Secretoglobin family 1D member 1 (SCGB1D1) from Homo sapiens (Human).